Reading from the N-terminus, the 174-residue chain is Secretory-abundant heat soluble protein 68234 (174 aa).

The N-terminal stretch at 1 to 19 is a signal peptide; sequence MARFLVALALFGVVAMTAA. An SAHS-c1 region spans residues 26–57; that stretch reads EWSGKPWLGKFVAEVTDKSENWEAFVDALGLP. Residues 72–100 are SAHS-c2; the sequence is YKQGDHYHHIFALPDKNFEKDIEFTLGQE. Residues 113–162 form an SAHS-c3 region; that stretch reads KYSEDGEKLVADVSIPTKGKTIRSEYEVQGDQLIKTYKTGDIVAKKWFKK.

It belongs to the Secretory-abundant heat soluble protein (SAHS) family.

It localises to the secreted. Its function is as follows. Secreted heat soluble protein acting as a molecular shield in water-deficient condition. Tardigrade-specific intrinsically disordered proteins (TDPs) are essential for desiccation tolerance by forming non-crystalline amorphous solids upon desiccation, and this vitrified state mirrors their protective capabilities. In Hypsibius exemplaris (Freshwater tardigrade), this protein is Secretory-abundant heat soluble protein 68234.